Consider the following 1632-residue polypeptide: uncharacterized protein (1632 aa).

Positions 1–15 (MSNNKQTAAPAATSN) are enriched in polar residues. A disordered region spans residues 1-23 (MSNNKQTAAPAATSNEKAENGAE). The Cytoplasmic portion of the chain corresponds to 1-63 (MSNNKQTAAP…TKDAFKGKYR (63 aa)). A helical membrane pass occupies residues 64 to 86 (VFYGNGLHTSIMFGAGTAALDLM). The Extracellular segment spans residues 87–1632 (TPGSFLPPFP…ESDGEEMSGE (1546 aa)). N-linked (GlcNAc...) asparagine; by host glycans are attached at residues asparagine 149 and asparagine 274. Residues 516–538 (ELSSQLGDTDTKKEQKEKRSKQG) are disordered. Asparagine 654, asparagine 719, and asparagine 797 each carry an N-linked (GlcNAc...) asparagine; by host glycan. The interval 838–890 (IKGTKKSDDGDSKTDGSGDMEDDFTSLAKMTNRKRKAGGKDGPSKKKKKDGAD) is disordered. 2 stretches are compositionally biased toward basic and acidic residues: residues 842–853 (KKSDDGDSKTDG) and 875–890 (GGKD…DGAD). Asparagine 1012, asparagine 1031, asparagine 1261, asparagine 1339, asparagine 1511, and asparagine 1546 each carry an N-linked (GlcNAc...) asparagine; by host glycan. Residues 1603–1632 (PSAMDVDEDEDEDMDDESDDESDGEEMSGE) form a disordered region. Residues 1607 to 1632 (DVDEDEDEDMDDESDDESDGEEMSGE) are compositionally biased toward acidic residues.

It localises to the host membrane. This is an uncharacterized protein from Ostreid herpesvirus 1 (isolate France) (OsHV-1).